We begin with the raw amino-acid sequence, 1715 residues long: Pentafunctional AROM polypeptide (1715 aa).

Over residues 1 to 17 (MTSTASAQQPVLRTKTP) the composition is skewed to polar residues. Residues 1-26 (MTSTASAQQPVLRTKTPSYHAPPSTD) are disordered. Residues 1 to 421 (MTSTASAQQP…VQNMASTVSD (421 aa)) are 3-dehydroquinate synthase. Residues 71-73 (DQN), 112-115 (EASK), 143-145 (GGV), and aspartate 148 contribute to the NAD(+) site. Arginine 159 serves as a coordination point for 7-phospho-2-dehydro-3-deoxy-D-arabino-heptonate. Residue 168-169 (TT) participates in NAD(+) binding. The 7-phospho-2-dehydro-3-deoxy-D-arabino-heptonate site is built by aspartate 175 and lysine 181. An NAD(+)-binding site is contributed by lysine 190. Asparagine 191 lines the 7-phospho-2-dehydro-3-deoxy-D-arabino-heptonate pocket. NAD(+) is bound by residues 208–211 (WLKT) and asparagine 219. Position 223 (glutamate 223) interacts with Zn(2+). 7-phospho-2-dehydro-3-deoxy-D-arabino-heptonate is bound by residues 223–226 (EVVK) and lysine 287. The active-site Proton acceptor; for 3-dehydroquinate synthase activity is the glutamate 297. 7-phospho-2-dehydro-3-deoxy-D-arabino-heptonate contacts are provided by residues 301 to 305 (RNLVN) and histidine 308. Zn(2+) is bound at residue histidine 308. The active-site Proton acceptor; for 3-dehydroquinate synthase activity is the histidine 312. 7-phospho-2-dehydro-3-deoxy-D-arabino-heptonate is bound by residues histidine 324 and lysine 393. A Zn(2+)-binding site is contributed by histidine 324. An EPSP synthase region spans residues 434 to 895 (VTPIHEQPNK…WDDLERKLGI (462 aa)). The active-site For EPSP synthase activity is cysteine 877. The segment at 948–1165 (HATIICIGMR…KGGRRTYFLS (218 aa)) is shikimate kinase. 955–962 (GMRASGKT) contributes to the ATP binding site. The interval 1166–1389 (LTFPDVVPKL…AAPGQLSFRQ (224 aa)) is 3-dehydroquinase. Histidine 1292 serves as the catalytic Proton acceptor; for 3-dehydroquinate dehydratase activity. Residue lysine 1320 is the Schiff-base intermediate with substrate; for 3-dehydroquinate dehydratase activity of the active site. The segment at 1402-1715 (ARRFALFGSP…AAWDVYLQRC (314 aa)) is shikimate dehydrogenase.

The protein in the N-terminal section; belongs to the sugar phosphate cyclases superfamily. Dehydroquinate synthase family. This sequence in the 2nd section; belongs to the EPSP synthase family. It in the 3rd section; belongs to the shikimate kinase family. In the 4th section; belongs to the type-I 3-dehydroquinase family. The protein in the C-terminal section; belongs to the shikimate dehydrogenase family. In terms of assembly, homodimer. Requires Zn(2+) as cofactor.

Its subcellular location is the cytoplasm. It catalyses the reaction 7-phospho-2-dehydro-3-deoxy-D-arabino-heptonate = 3-dehydroquinate + phosphate. It carries out the reaction 3-dehydroquinate = 3-dehydroshikimate + H2O. The enzyme catalyses shikimate + NADP(+) = 3-dehydroshikimate + NADPH + H(+). The catalysed reaction is shikimate + ATP = 3-phosphoshikimate + ADP + H(+). It catalyses the reaction 3-phosphoshikimate + phosphoenolpyruvate = 5-O-(1-carboxyvinyl)-3-phosphoshikimate + phosphate. The protein operates within metabolic intermediate biosynthesis; chorismate biosynthesis; chorismate from D-erythrose 4-phosphate and phosphoenolpyruvate: step 2/7. It participates in metabolic intermediate biosynthesis; chorismate biosynthesis; chorismate from D-erythrose 4-phosphate and phosphoenolpyruvate: step 3/7. It functions in the pathway metabolic intermediate biosynthesis; chorismate biosynthesis; chorismate from D-erythrose 4-phosphate and phosphoenolpyruvate: step 4/7. Its pathway is metabolic intermediate biosynthesis; chorismate biosynthesis; chorismate from D-erythrose 4-phosphate and phosphoenolpyruvate: step 5/7. The protein operates within metabolic intermediate biosynthesis; chorismate biosynthesis; chorismate from D-erythrose 4-phosphate and phosphoenolpyruvate: step 6/7. The AROM polypeptide catalyzes 5 consecutive enzymatic reactions in prechorismate polyaromatic amino acid biosynthesis. The sequence is that of Pentafunctional AROM polypeptide from Mycosarcoma maydis (Corn smut fungus).